The chain runs to 902 residues: Cytosolic carboxypeptidase 2 (902 aa).

The 271-residue stretch at 396 to 666 (YPYTYTDLQC…HVCDTLLDFC (271 aa)) folds into the Peptidase M14 domain. 3 residues coordinate Zn(2+): histidine 462, glutamate 465, and histidine 558. Glutamate 630 acts as the Proton donor/acceptor in catalysis. The span at 746–758 (FKKKKKKSLQTRK) shows a compositional bias: basic residues. Disordered regions lie at residues 746-770 (FKKKKKKSLQTRKQRNEQYQKKNLM) and 796-879 (FKNS…PRSR). The segment covering 853–866 (VSCSPKRTINSSQE) has biased composition (polar residues).

The protein belongs to the peptidase M14 family. As to quaternary structure, interacts with RARRES1, KIF11 AND MAPRE1. It depends on Zn(2+) as a cofactor.

It localises to the cytoplasm. It is found in the cytosol. Its subcellular location is the cytoskeleton. The protein localises to the microtubule organizing center. The protein resides in the centrosome. It localises to the centriole. It is found in the cilium basal body. It catalyses the reaction (L-glutamyl)(n+1)-gamma-L-glutamyl-L-glutamyl-[protein] + H2O = (L-glutamyl)(n)-gamma-L-glutamyl-L-glutamyl-[protein] + L-glutamate. Its activity is regulated as follows. Inhibited by RARRES1. Its function is as follows. Metallocarboxypeptidase that mediates deglutamylation of tubulin and non-tubulin target proteins. Catalyzes the removal of polyglutamate side chains present on the gamma-carboxyl group of glutamate residues within the C-terminal tail of tubulin protein. Specifically cleaves tubulin long-side-chains, while it is not able to remove the branching point glutamate. Also catalyzes the removal of polyglutamate residues from the carboxy-terminus of non-tubulin proteins such as MYLK. In Homo sapiens (Human), this protein is Cytosolic carboxypeptidase 2.